We begin with the raw amino-acid sequence, 390 residues long: (S)-8-oxocitronellyl enol synthase CYC2 (390 aa).

Residues 35–37 (TGI), 63–64 (RR), 81–82 (DI), 105–106 (TW), and Gln143 contribute to the NADP(+) site. Catalysis depends on residues Lys147 and Tyr179. 2 residues coordinate substrate: Lys147 and Tyr179. Residues Tyr179 and 213–215 (SMM) each bind NADP(+).

It belongs to the short-chain dehydrogenases/reductases (SDR) family. Highly divergent.

The enzyme catalyses (S)-8-oxocitronellyl enol + NADP(+) = (6E)-8-oxogeranial + NADPH + H(+). It catalyses the reaction (S)-8-oxocitronellyl enol + NAD(+) = (6E)-8-oxogeranial + NADH + H(+). In terms of biological role, iridoid synthase that catalyzes the first step in generation of the iridoid ring scaffold using the linear monoterpene (6E)-8-oxogeranial as substrate. Iridoids comprise a large family of distinctive bicyclic monoterpenes that possess a wide range of pharmacological activities, including anticancer, anti-inflammatory, antifungal and antibacterial activities. The polypeptide is (S)-8-oxocitronellyl enol synthase CYC2 (Camptotheca acuminata (Happy tree)).